The sequence spans 406 residues: Succinylornithine transaminase (406 aa).

An N6-(pyridoxal phosphate)lysine modification is found at Lys-252.

It belongs to the class-III pyridoxal-phosphate-dependent aminotransferase family. AstC subfamily. Requires pyridoxal 5'-phosphate as cofactor.

The enzyme catalyses N(2)-succinyl-L-ornithine + 2-oxoglutarate = N-succinyl-L-glutamate 5-semialdehyde + L-glutamate. The protein operates within amino-acid degradation; L-arginine degradation via AST pathway; L-glutamate and succinate from L-arginine: step 3/5. In terms of biological role, catalyzes the transamination of N(2)-succinylornithine and alpha-ketoglutarate into N(2)-succinylglutamate semialdehyde and glutamate. Can also act as an acetylornithine aminotransferase. The chain is Succinylornithine transaminase from Citrobacter koseri (strain ATCC BAA-895 / CDC 4225-83 / SGSC4696).